Consider the following 280-residue polypeptide: Probable inactive shikimate kinase like 1, chloroplastic (280 aa).

The transit peptide at 1 to 54 (MEIFSASASLTLTGFVPRLLPLLSPQARTTLCKPLLSSSSTRLISCHSRIAPSR) directs the protein to the chloroplast.

Belongs to the shikimate kinase family.

It is found in the plastid. The protein resides in the chloroplast. In terms of biological role, required for chloroplast biogenesis. The chain is Probable inactive shikimate kinase like 1, chloroplastic (SKL1) from Arabidopsis thaliana (Mouse-ear cress).